We begin with the raw amino-acid sequence, 144 residues long: Small ribosomal subunit protein eS19A (144 aa).

It belongs to the eukaryotic ribosomal protein eS19 family. As to quaternary structure, component of the small ribosomal subunit (SSU). Mature yeast ribosomes consist of a small (40S) and a large (60S) subunit. The 40S small subunit contains 1 molecule of ribosomal RNA (18S rRNA) and 33 different proteins (encoded by 57 genes). The large 60S subunit contains 3 rRNA molecules (25S, 5.8S and 5S rRNA) and 46 different proteins (encoded by 81 genes).

The protein resides in the cytoplasm. Functionally, component of the ribosome, a large ribonucleoprotein complex responsible for the synthesis of proteins in the cell. The small ribosomal subunit (SSU) binds messenger RNAs (mRNAs) and translates the encoded message by selecting cognate aminoacyl-transfer RNA (tRNA) molecules. The large subunit (LSU) contains the ribosomal catalytic site termed the peptidyl transferase center (PTC), which catalyzes the formation of peptide bonds, thereby polymerizing the amino acids delivered by tRNAs into a polypeptide chain. The nascent polypeptides leave the ribosome through a tunnel in the LSU and interact with protein factors that function in enzymatic processing, targeting, and the membrane insertion of nascent chains at the exit of the ribosomal tunnel. eS19 is required for proper maturation of the small (40S) ribosomal subunit. Binds to 40S pre-ribosomal particles, probably required after association of NOC4 but before association of ENP1, TSR1 and RIO2 with 20/21S pre-rRNA. This Saccharomyces cerevisiae (strain ATCC 204508 / S288c) (Baker's yeast) protein is Small ribosomal subunit protein eS19A.